The primary structure comprises 103 residues: Histone H4 (103 aa).

Positions 1-14 (MSGRGKGGKGLGKG) are enriched in gly residues. The segment at 1–20 (MSGRGKGGKGLGKGGAKRHR) is disordered. N6-(2-hydroxyisobutyryl)lysine; alternate occurs at positions 6, 9, 13, 17, 32, and 45. At K6 the chain carries N6-acetyl-N6-methyllysine; alternate. An N6-butyryllysine; alternate mark is found at K6, K9, K13, K17, K32, and K45. The residue at position 6 (K6) is an N6-glutaryllysine; alternate. K9 is modified (N6-propionyllysine; alternate). K13 is subject to N6-acetyl-N6-methyllysine; alternate. K13 is modified (N6-glutaryllysine; alternate). Residues K17, K32, and K45 each carry the N6-propionyllysine; alternate modification. The DNA-binding element occupies 17 to 21 (KRHRK). The residue at position 32 (K32) is an N6-glutaryllysine; alternate. K32 bears the N6-succinyllysine; alternate mark. Residues K60, K78, K80, and K92 each carry the N6-glutaryllysine; alternate modification. Residue K60 is modified to N6-(2-hydroxyisobutyryl)lysine. An N6-(2-hydroxyisobutyryl)lysine; alternate mark is found at K78, K80, and K92. N6-butyryllysine; alternate occurs at positions 78, 80, and 92. Residues K78, K80, and K92 each carry the N6-propionyllysine; alternate modification. Residue K78 is modified to N6-succinyllysine. Residue K92 is modified to N6-succinyllysine; alternate.

Belongs to the histone H4 family. The nucleosome is a histone octamer containing two molecules each of H2A, H2B, H3 and H4 assembled in one H3-H4 heterotetramer and two H2A-H2B heterodimers. The octamer wraps approximately 147 bp of DNA. Post-translationally, butyrylation of histones marks active promoters and competes with histone acetylation. Glutarylation at Lys-92 (H4K91glu) destabilizes nucleosomes by promoting dissociation of the H2A-H2B dimers from nucleosomes.

The protein resides in the nucleus. The protein localises to the chromosome. Core component of nucleosome. Nucleosomes wrap and compact DNA into chromatin, limiting DNA accessibility to the cellular machineries which require DNA as a template. Histones thereby play a central role in transcription regulation, DNA repair, DNA replication and chromosomal stability. DNA accessibility is regulated via a complex set of post-translational modifications of histones, also called histone code, and nucleosome remodeling. The sequence is that of Histone H4 (H4.1) from Oikopleura dioica (Tunicate).